Here is a 199-residue protein sequence, read N- to C-terminus: Probable cobalt-precorrin-6B C(15)-methyltransferase (decarboxylating) (199 aa).

S-adenosyl-L-methionine is bound by residues threonine 24, glycine 48–glycine 52, aspartate 72, and alanine 101.

This sequence belongs to the methyltransferase superfamily. Archaeal-type CbiT family.

It carries out the reaction Co-precorrin-6B + S-adenosyl-L-methionine = Co-precorrin-7 + S-adenosyl-L-homocysteine + CO2. It functions in the pathway cofactor biosynthesis; adenosylcobalamin biosynthesis; cob(II)yrinate a,c-diamide from sirohydrochlorin (anaerobic route): step 8/10. Catalyzes the methylation of C-15 in cobalt-precorrin-6B followed by the decarboxylation of C-12 to form cobalt-precorrin-7. This is Probable cobalt-precorrin-6B C(15)-methyltransferase (decarboxylating) from Saccharolobus solfataricus (strain ATCC 35092 / DSM 1617 / JCM 11322 / P2) (Sulfolobus solfataricus).